The sequence spans 178 residues: Neuroblastoma suppressor of tumorigenicity 1 (178 aa).

The N-terminal stretch at 1 to 16 is a signal peptide; it reads MLWVLVGAVLPVMLLA. 5 cysteine pairs are disulfide-bonded: Cys-34–Cys-84, Cys-48–Cys-98, Cys-58–Cys-117, Cys-62–Cys-119, and Cys-81–Cys-122. The region spanning 34–123 is the CTCK domain; sequence CEAKNITQIV…IVHCSCQACG (90 aa). The disordered stretch occupies residues 132 to 178; it reads NVYVQGEDSPGSQPGPHSHAHPHPGGQTPEPEEPPGAPQVEEEGAED. Over residues 140–160 the composition is skewed to low complexity; that stretch reads SPGSQPGPHSHAHPHPGGQTP.

This sequence belongs to the DAN family. As to quaternary structure, homodimer.

The protein localises to the secreted. Possible candidate as a tumor suppressor gene of neuroblastoma. May play an important role in preventing cells from entering the final stage (G1/S) of the transformation process. The polypeptide is Neuroblastoma suppressor of tumorigenicity 1 (Nbl1) (Mus musculus (Mouse)).